A 77-amino-acid polypeptide reads, in one-letter code: Translational regulator CsrA (77 aa).

The protein belongs to the CsrA/RsmA family. In terms of assembly, homodimer; the beta-strands of each monomer intercalate to form a hydrophobic core, while the alpha-helices form wings that extend away from the core.

Its subcellular location is the cytoplasm. A translational regulator that binds mRNA to regulate translation initiation and/or mRNA stability. Usually binds in the 5'-UTR at or near the Shine-Dalgarno sequence preventing ribosome-binding, thus repressing translation. Its main target seems to be the major flagellin gene, while its function is anatagonized by FliW. The polypeptide is Translational regulator CsrA (Desulfitobacterium hafniense (strain Y51)).